An 880-amino-acid polypeptide reads, in one-letter code: Alanine--tRNA ligase (880 aa).

Zn(2+) contacts are provided by H567, H571, C669, and H673.

It belongs to the class-II aminoacyl-tRNA synthetase family. Requires Zn(2+) as cofactor.

It localises to the cytoplasm. The catalysed reaction is tRNA(Ala) + L-alanine + ATP = L-alanyl-tRNA(Ala) + AMP + diphosphate. Its function is as follows. Catalyzes the attachment of alanine to tRNA(Ala) in a two-step reaction: alanine is first activated by ATP to form Ala-AMP and then transferred to the acceptor end of tRNA(Ala). Also edits incorrectly charged Ser-tRNA(Ala) and Gly-tRNA(Ala) via its editing domain. The chain is Alanine--tRNA ligase from Bacillus cytotoxicus (strain DSM 22905 / CIP 110041 / 391-98 / NVH 391-98).